The following is a 573-amino-acid chain: Isocitrate dehydrogenase kinase/phosphatase (573 aa).

ATP is bound by residues 317–323 (APGVRGM) and K338. D373 is a catalytic residue.

Belongs to the AceK family.

Its subcellular location is the cytoplasm. It carries out the reaction L-seryl-[isocitrate dehydrogenase] + ATP = O-phospho-L-seryl-[isocitrate dehydrogenase] + ADP + H(+). In terms of biological role, bifunctional enzyme which can phosphorylate or dephosphorylate isocitrate dehydrogenase (IDH) on a specific serine residue. This is a regulatory mechanism which enables bacteria to bypass the Krebs cycle via the glyoxylate shunt in response to the source of carbon. When bacteria are grown on glucose, IDH is fully active and unphosphorylated, but when grown on acetate or ethanol, the activity of IDH declines drastically concomitant with its phosphorylation. In Pseudomonas fluorescens (strain ATCC BAA-477 / NRRL B-23932 / Pf-5), this protein is Isocitrate dehydrogenase kinase/phosphatase.